Consider the following 439-residue polypeptide: Xylose isomerase (439 aa).

Residues His-101 and Asp-104 contribute to the active site. The Mg(2+) site is built by Glu-232, Glu-268, His-271, Asp-296, Asp-307, Asp-309, and Asp-339.

It belongs to the xylose isomerase family. Homotetramer. The cofactor is Mg(2+).

The protein resides in the cytoplasm. It carries out the reaction alpha-D-xylose = alpha-D-xylulofuranose. The protein is Xylose isomerase of Serratia proteamaculans (strain 568).